The following is a 331-amino-acid chain: Olfactory receptor 6K3 (331 aa).

Over 1–41 the chain is Extracellular; it reads MCWTMPSPFTGSSTRNMESGNQSTVTEFIFTGFPQLQDGSL. Asn-21 carries an N-linked (GlcNAc...) asparagine glycan. The helical transmembrane segment at 42 to 62 threads the bilayer; the sequence is LYFFPLLFIYTFIIIDNLLIF. The Cytoplasmic segment spans residues 63 to 70; the sequence is SAVRLDTH. The chain crosses the membrane as a helical span at residues 71–91; sequence LHNPMYNFISIFSFLEIWYTT. Topologically, residues 92–115 are extracellular; it reads ATIPKMLSNLISEKKAISMTGCIL. Residues Cys-113 and Cys-205 are joined by a disulfide bond. The helical transmembrane segment at 116 to 136 threads the bilayer; that stretch reads QMYFFHSLENSEGILLTTMAI. Topologically, residues 137 to 155 are cytoplasmic; sequence DRYVAICNPLRYQMIMTPR. The chain crosses the membrane as a helical span at residues 156-176; the sequence is LCAQLSAGSCLFGFLILLPEI. At 177–212 the chain is on the extracellular side; that stretch reads VMISTLPFCGPNQIHQIFCDLVPVLSLACTDTSMIL. A helical transmembrane segment spans residues 213–232; that stretch reads IEDVIHAVTIIITFLIIALS. At 233–252 the chain is on the cytoplasmic side; sequence YVRIVTVILRIPSSEGRQKA. A helical transmembrane segment spans residues 253-273; sequence FSTCAGHLMVFPIFFGSVSLM. Topologically, residues 274 to 286 are extracellular; it reads YLRFSDTYPPVLD. Residues 287–307 form a helical membrane-spanning segment; it reads TAIALMFTVLAPFFNPIIYSL. At 308 to 331 the chain is on the cytoplasmic side; it reads RNKDMNNAIKKLFCLQKVLNKPGG.

It belongs to the G-protein coupled receptor 1 family.

Its subcellular location is the cell membrane. Odorant receptor. The chain is Olfactory receptor 6K3 (OR6K3) from Homo sapiens (Human).